A 346-amino-acid polypeptide reads, in one-letter code: Patr class I histocompatibility antigen, CH28 alpha chain (346 aa).

Residues 1-21 (MAPRSLLLLFSGALALTETWA) form the signal peptide. Residues 22-111 (GSHSLRYFST…LLRRYNQSEA (90 aa)) form an alpha-1 region. Over 22-305 (GSHSLRYFST…EQSPQPTIPI (284 aa)) the chain is Extracellular. N-linked (GlcNAc...) asparagine glycosylation is present at N107. Residues 112 to 203 (GSHTLQGMNG…ENGKETLQRA (92 aa)) are alpha-2. 2 cysteine pairs are disulfide-bonded: C122/C185 and C224/C280. The interval 204 to 295 (DPPKAHIAHH…GLPQPLTLRW (92 aa)) is alpha-3. The Ig-like C1-type domain occupies 206 to 294 (PKAHIAHHPI…EGLPQPLTLR (89 aa)). The tract at residues 296 to 305 (EQSPQPTIPI) is connecting peptide. The helical transmembrane segment at 306 to 329 (VGIVAGLVVLGAVVTGAVVAAVMW) threads the bilayer. The Cytoplasmic portion of the chain corresponds to 330 to 346 (RKKSSDRNRGSYSQAAV).

This sequence belongs to the MHC class I family. In terms of assembly, heterodimer of an alpha chain and a beta chain (beta-2-microglobulin).

It is found in the membrane. Involved in the presentation of foreign antigens to the immune system. The polypeptide is Patr class I histocompatibility antigen, CH28 alpha chain (Pan troglodytes (Chimpanzee)).